A 517-amino-acid polypeptide reads, in one-letter code: Aspartyl/glutamyl-tRNA(Asn/Gln) amidotransferase subunit B (517 aa).

Belongs to the GatB/GatE family. GatB subfamily. Heterotrimer of A, B and C subunits.

It carries out the reaction L-glutamyl-tRNA(Gln) + L-glutamine + ATP + H2O = L-glutaminyl-tRNA(Gln) + L-glutamate + ADP + phosphate + H(+). The catalysed reaction is L-aspartyl-tRNA(Asn) + L-glutamine + ATP + H2O = L-asparaginyl-tRNA(Asn) + L-glutamate + ADP + phosphate + 2 H(+). Its function is as follows. Allows the formation of correctly charged Asn-tRNA(Asn) or Gln-tRNA(Gln) through the transamidation of misacylated Asp-tRNA(Asn) or Glu-tRNA(Gln) in organisms which lack either or both of asparaginyl-tRNA or glutaminyl-tRNA synthetases. The reaction takes place in the presence of glutamine and ATP through an activated phospho-Asp-tRNA(Asn) or phospho-Glu-tRNA(Gln). The polypeptide is Aspartyl/glutamyl-tRNA(Asn/Gln) amidotransferase subunit B (Thermobifida fusca (strain YX)).